The following is a 393-amino-acid chain: Chorismate synthase (393 aa).

2 residues coordinate NADP(+): R40 and R46. FMN-binding positions include 129–131, 249–250, G301, 316–320, and R342; these read RSS, QA, and KPIPT.

This sequence belongs to the chorismate synthase family. In terms of assembly, homotetramer. The cofactor is FMNH2.

The enzyme catalyses 5-O-(1-carboxyvinyl)-3-phosphoshikimate = chorismate + phosphate. The protein operates within metabolic intermediate biosynthesis; chorismate biosynthesis; chorismate from D-erythrose 4-phosphate and phosphoenolpyruvate: step 7/7. Functionally, catalyzes the anti-1,4-elimination of the C-3 phosphate and the C-6 proR hydrogen from 5-enolpyruvylshikimate-3-phosphate (EPSP) to yield chorismate, which is the branch point compound that serves as the starting substrate for the three terminal pathways of aromatic amino acid biosynthesis. This reaction introduces a second double bond into the aromatic ring system. This chain is Chorismate synthase, found in Geobacter metallireducens (strain ATCC 53774 / DSM 7210 / GS-15).